A 443-amino-acid chain; its full sequence is Adenylosuccinate synthetase (443 aa).

GTP is bound by residues 12–18 (GDEGKGK) and 40–42 (GHT). The active-site Proton acceptor is the Asp-13. Mg(2+)-binding residues include Asp-13 and Gly-40. IMP-binding positions include 13–16 (DEGK), 38–41 (NAGH), Thr-128, Arg-142, Gln-223, Thr-238, and Arg-302. His-41 serves as the catalytic Proton donor. A substrate-binding site is contributed by 298–304 (TTTGRRR). Residues Arg-304, 330–332 (KLD), and 412–414 (SLG) contribute to the GTP site.

The protein belongs to the adenylosuccinate synthetase family. In terms of assembly, homodimer. Mg(2+) is required as a cofactor.

It is found in the cytoplasm. It catalyses the reaction IMP + L-aspartate + GTP = N(6)-(1,2-dicarboxyethyl)-AMP + GDP + phosphate + 2 H(+). Its pathway is purine metabolism; AMP biosynthesis via de novo pathway; AMP from IMP: step 1/2. Functionally, plays an important role in the de novo pathway of purine nucleotide biosynthesis. Catalyzes the first committed step in the biosynthesis of AMP from IMP. This Picosynechococcus sp. (strain ATCC 27264 / PCC 7002 / PR-6) (Agmenellum quadruplicatum) protein is Adenylosuccinate synthetase.